A 362-amino-acid chain; its full sequence is Dihydroorotate dehydrogenase (quinone) (362 aa).

Residues 62–66 (AGYDK) and Thr-86 each bind FMN. A substrate-binding site is contributed by Lys-66. Substrate is bound at residue 111–115 (NRLGF). FMN-binding residues include Asn-139 and Asn-170. Asn-170 serves as a coordination point for substrate. Ser-173 acts as the Nucleophile in catalysis. Asn-175 provides a ligand contact to substrate. The FMN site is built by Lys-215 and Ser-243. Residue 244-245 (NT) participates in substrate binding. FMN is bound by residues Gly-266, Gly-295, and 316-317 (YS).

Belongs to the dihydroorotate dehydrogenase family. Type 2 subfamily. In terms of assembly, monomer. Requires FMN as cofactor.

Its subcellular location is the cell membrane. The catalysed reaction is (S)-dihydroorotate + a quinone = orotate + a quinol. It functions in the pathway pyrimidine metabolism; UMP biosynthesis via de novo pathway; orotate from (S)-dihydroorotate (quinone route): step 1/1. Functionally, catalyzes the conversion of dihydroorotate to orotate with quinone as electron acceptor. In Sinorhizobium fredii (strain NBRC 101917 / NGR234), this protein is Dihydroorotate dehydrogenase (quinone).